Consider the following 562-residue polypeptide: Glucocorticoid modulatory element-binding protein 1 (562 aa).

Alanine 2 carries the post-translational modification N-acetylalanine. An SAND domain is found at 72–156; it reads ASSIEGNEDM…RKMMDSGQID (85 aa). Residue cysteine 103 participates in Zn(2+) binding. Residues lysine 129, lysine 133, lysine 136, and arginine 147 each contribute to the DNA site. Zn(2+) is bound by residues histidine 160, cysteine 164, and cysteine 168. Residues 311 to 355 are a coiled coil; it reads LDNRRKQVEQGEEQFLYTLADLERQLEEQKKQAQDPRLKSQTVQN. The disordered stretch occupies residues 360 to 384; sequence PVSTPKPPKRPRLQRPASTTVLSPS. Residues 375–384 show a composition bias toward polar residues; the sequence is PASTTVLSPS.

Homodimer, and heterodimer of GMEB1 and GMEB2. Interacts with TRIM63. Interacts with the glucocorticoid receptor (NR3C1) and NCOA2/TIF2. May interact with HSP27 and CREB-binding protein (CBP). As to expression, ubiquitous. Low levels were detected in heart, brain, spleen, lung, liver, skeletal muscle, kidney and testis.

It is found in the nucleus. Its subcellular location is the cytoplasm. Trans-acting factor that binds to glucocorticoid modulatory elements (GME) present in the TAT (tyrosine aminotransferase) promoter and increases sensitivity to low concentrations of glucocorticoids. Also binds to the transferrin receptor promoter. The protein is Glucocorticoid modulatory element-binding protein 1 (Gmeb1) of Mus musculus (Mouse).